Reading from the N-terminus, the 642-residue chain is Assimilatory sulfite reductase (ferredoxin), chloroplastic (642 aa).

The N-terminal 61 residues, 1–61 (MSSTFRAPAG…SSSSSSPIQA (61 aa)), are a transit peptide targeting the chloroplast. The segment at 46-74 (PVPPSASSSSSSPIQAVSTPAKPETATKR) is disordered. The [4Fe-4S] cluster site is built by cysteine 503, cysteine 509, cysteine 549, and cysteine 553. Residue cysteine 553 participates in siroheme binding.

Belongs to the nitrite and sulfite reductase 4Fe-4S domain family. As to quaternary structure, monomer. Interacts with ferredoxin. The cofactor is siroheme. [4Fe-4S] cluster is required as a cofactor. Post-translationally, phosphorylated; this phosphorylation reduces DNA-binding. As to expression, present in leaves and roots.

Its subcellular location is the plastid. The protein resides in the chloroplast stroma. It localises to the chloroplast nucleoid. The protein localises to the plastid stroma. It carries out the reaction hydrogen sulfide + 6 oxidized [2Fe-2S]-[ferredoxin] + 3 H2O = sulfite + 6 reduced [2Fe-2S]-[ferredoxin] + 7 H(+). In terms of biological role, essential protein with sulfite reductase activity required in assimilatory sulfate reduction pathway during both primary and secondary metabolism and thus involved in development and growth. DNA-binding protein that binds to both double-stranded and single-stranded DNA without significant sequence specificity to reversibly repress the transcriptional activity of chloroplast nucleoids by promoting DNA compaction and possibly regulate DNA replication. This is Assimilatory sulfite reductase (ferredoxin), chloroplastic (SIR) from Arabidopsis thaliana (Mouse-ear cress).